A 270-amino-acid chain; its full sequence is Small ribosomal subunit protein uS3 (270 aa).

The KH type-2 domain maps to 38–106 (IRQMLTRGME…QVQLNILEVK (69 aa)). The segment at 212-270 (EREAAQAAQRAAGPQRRERPGRRRRGGGGGGGQQQQQAEKATAQATEAAKAAKSGNEGS) is disordered. Low complexity-rich tracts occupy residues 216 to 225 (AQAAQRAAGP) and 245 to 263 (QQQQAEKATAQATEAAKAA).

This sequence belongs to the universal ribosomal protein uS3 family. Part of the 30S ribosomal subunit. Forms a tight complex with proteins S10 and S14.

Its function is as follows. Binds the lower part of the 30S subunit head. Binds mRNA in the 70S ribosome, positioning it for translation. The sequence is that of Small ribosomal subunit protein uS3 from Thermobifida fusca (strain YX).